The sequence spans 586 residues: DNA-directed RNA polymerase subunit beta' (586 aa).

4 residues coordinate Zn(2+): cysteine 64, cysteine 66, cysteine 85, and cysteine 88. Residues aspartate 448, aspartate 450, and aspartate 452 each contribute to the Mg(2+) site.

It belongs to the RNA polymerase beta' chain family. RpoC1 subfamily. As to quaternary structure, in plastids the minimal PEP RNA polymerase catalytic core is composed of four subunits: alpha, beta, beta', and beta''. When a (nuclear-encoded) sigma factor is associated with the core the holoenzyme is formed, which can initiate transcription. Mg(2+) is required as a cofactor. Requires Zn(2+) as cofactor.

It localises to the plastid. It is found in the chloroplast. It catalyses the reaction RNA(n) + a ribonucleoside 5'-triphosphate = RNA(n+1) + diphosphate. DNA-dependent RNA polymerase catalyzes the transcription of DNA into RNA using the four ribonucleoside triphosphates as substrates. This Euglena gracilis protein is DNA-directed RNA polymerase subunit beta'.